The sequence spans 214 residues: Redox-sensing transcriptional repressor Rex (214 aa).

Positions 17–56 (LYYRIFKRFHADQVEKASSKQIADAMGIDSATVRRDFSYF) form a DNA-binding region, H-T-H motif. 91 to 96 (GCGNIG) contacts NAD(+).

Belongs to the transcriptional regulatory Rex family. Homodimer.

Its subcellular location is the cytoplasm. Its function is as follows. Modulates transcription in response to changes in cellular NADH/NAD(+) redox state. This chain is Redox-sensing transcriptional repressor Rex, found in Streptococcus pyogenes serotype M4 (strain MGAS10750).